The sequence spans 1210 residues: uncharacterized protein (1210 aa).

To E.coli molybdate metabolism regulator (MolR).

This is an uncharacterized protein from Escherichia coli (strain K12).